The sequence spans 714 residues: Fatty acid oxidation complex subunit alpha (714 aa).

Residues 1-190 form an enoyl-CoA hydratase region; the sequence is MEMASAFTLN…KLGLVDDVVP (190 aa). The 3-hydroxyacyl-CoA dehydrogenase stretch occupies residues 306-714; the sequence is APLNSVGILG…FWKTTATDLQ (409 aa).

It in the N-terminal section; belongs to the enoyl-CoA hydratase/isomerase family. The protein in the central section; belongs to the 3-hydroxyacyl-CoA dehydrogenase family. As to quaternary structure, heterotetramer of two alpha chains (FadJ) and two beta chains (FadI).

Its subcellular location is the cytoplasm. The catalysed reaction is a (3S)-3-hydroxyacyl-CoA = a (2E)-enoyl-CoA + H2O. The enzyme catalyses a 4-saturated-(3S)-3-hydroxyacyl-CoA = a (3E)-enoyl-CoA + H2O. It carries out the reaction a (3S)-3-hydroxyacyl-CoA + NAD(+) = a 3-oxoacyl-CoA + NADH + H(+). It catalyses the reaction (3S)-3-hydroxybutanoyl-CoA = (3R)-3-hydroxybutanoyl-CoA. It functions in the pathway lipid metabolism; fatty acid beta-oxidation. Catalyzes the formation of a hydroxyacyl-CoA by addition of water on enoyl-CoA. Also exhibits 3-hydroxyacyl-CoA epimerase and 3-hydroxyacyl-CoA dehydrogenase activities. The polypeptide is Fatty acid oxidation complex subunit alpha (Escherichia coli O9:H4 (strain HS)).